We begin with the raw amino-acid sequence, 387 residues long: Alkanesulfonate monooxygenase (387 aa).

Belongs to the SsuD family.

The catalysed reaction is an alkanesulfonate + FMNH2 + O2 = an aldehyde + FMN + sulfite + H2O + 2 H(+). Its function is as follows. Catalyzes the desulfonation of aliphatic sulfonates. The polypeptide is Alkanesulfonate monooxygenase (Cupriavidus necator (strain ATCC 17699 / DSM 428 / KCTC 22496 / NCIMB 10442 / H16 / Stanier 337) (Ralstonia eutropha)).